The chain runs to 142 residues: Universal stress protein C (142 aa).

Belongs to the universal stress protein A family.

Its subcellular location is the cytoplasm. Functionally, required for resistance to DNA-damaging agents. This chain is Universal stress protein C (uspC), found in Salmonella typhimurium (strain LT2 / SGSC1412 / ATCC 700720).